A 296-amino-acid polypeptide reads, in one-letter code: Glycine N-acyltransferase (296 aa).

Lysine 16, lysine 127, and lysine 141 each carry N6-acetyllysine; alternate. 3 positions are modified to N6-succinyllysine; alternate: lysine 16, lysine 127, and lysine 141. The residue at position 159 (lysine 159) is an N6-acetyllysine. Residue lysine 169 is modified to N6-succinyllysine. N6-acetyllysine; alternate is present on residues lysine 183 and lysine 256. N6-succinyllysine; alternate is present on residues lysine 183 and lysine 256.

Belongs to the glycine N-acyltransferase family.

It localises to the mitochondrion. It catalyses the reaction an acyl-CoA + glycine = an N-acylglycine + CoA + H(+). The enzyme catalyses benzoyl-CoA + glycine = N-benzoylglycine + CoA + H(+). Mitochondrial acyltransferase which transfers an acyl group to the N-terminus of glycine and glutamine, although much less efficiently. Can conjugate a multitude of substrates to form a variety of N-acylglycines, thereby detoxify xenobiotics, such as benzoic acid or salicylic acid, and endogenous organic acids, such as isovaleric acid. This chain is Glycine N-acyltransferase (GLYAT), found in Pongo abelii (Sumatran orangutan).